The sequence spans 952 residues: ALS2 C-terminal-like protein (952 aa).

MORN repeat units follow at residues 358–380 (YDGE…DGRN), 381–403 (HVGT…QASE), 409–431 (YKCH…TDEV), 432–454 (YKGY…PQAP), 459–481 (YTGH…DRGE), 483–505 (YIGM…AGVC), 506–528 (YQGT…DDSL), and 529–552 (YEGT…NGFT). The VPS9 domain maps to 795–941 (LFPDTKLLEF…IQKEDMRPHH (147 aa)).

In terms of assembly, homodimer. Forms a heteromeric complex with ALS2. Interacts with ALS2 and RAB5A. In terms of tissue distribution, expressed in heart, lung, liver and kidney.

The protein localises to the cytoplasm. Functionally, acts as a guanine nucleotide exchange factor (GEF) for Rab5 GTPase. Regulates the ALS2-mediated endosome dynamics. The polypeptide is ALS2 C-terminal-like protein (Als2cl) (Mus musculus (Mouse)).